The sequence spans 147 residues: Large ribosomal subunit protein bL9 (147 aa).

This sequence belongs to the bacterial ribosomal protein bL9 family.

Its function is as follows. Binds to the 23S rRNA. In Campylobacter lari (strain RM2100 / D67 / ATCC BAA-1060), this protein is Large ribosomal subunit protein bL9.